The chain runs to 306 residues: Acetyl-coenzyme A carboxylase carboxyl transferase subunit beta (306 aa).

The 270-residue stretch at 25-294 folds into the CoA carboxyltransferase N-terminal domain; sequence LWIKDPTSGE…APEPSHAFSK (270 aa). The segment at 287 to 306 is disordered; the sequence is EPSHAFSKDSQTQISKTKAA. Positions 294–306 are enriched in polar residues; it reads KDSQTQISKTKAA.

Belongs to the AccD/PCCB family. In terms of assembly, acetyl-CoA carboxylase is a heterohexamer composed of biotin carboxyl carrier protein (AccB), biotin carboxylase (AccC) and two subunits each of ACCase subunit alpha (AccA) and ACCase subunit beta (AccD).

The protein resides in the cytoplasm. It carries out the reaction N(6)-carboxybiotinyl-L-lysyl-[protein] + acetyl-CoA = N(6)-biotinyl-L-lysyl-[protein] + malonyl-CoA. Its pathway is lipid metabolism; malonyl-CoA biosynthesis; malonyl-CoA from acetyl-CoA: step 1/1. In terms of biological role, component of the acetyl coenzyme A carboxylase (ACC) complex. Biotin carboxylase (BC) catalyzes the carboxylation of biotin on its carrier protein (BCCP) and then the CO(2) group is transferred by the transcarboxylase to acetyl-CoA to form malonyl-CoA. In Bartonella bacilliformis (strain ATCC 35685 / KC583 / Herrer 020/F12,63), this protein is Acetyl-coenzyme A carboxylase carboxyl transferase subunit beta.